The chain runs to 410 residues: Tryptophan synthase beta chain (410 aa).

N6-(pyridoxal phosphate)lysine is present on Lys-104.

The protein belongs to the TrpB family. As to quaternary structure, tetramer of two alpha and two beta chains. Pyridoxal 5'-phosphate serves as cofactor.

It carries out the reaction (1S,2R)-1-C-(indol-3-yl)glycerol 3-phosphate + L-serine = D-glyceraldehyde 3-phosphate + L-tryptophan + H2O. Its pathway is amino-acid biosynthesis; L-tryptophan biosynthesis; L-tryptophan from chorismate: step 5/5. In terms of biological role, the beta subunit is responsible for the synthesis of L-tryptophan from indole and L-serine. The chain is Tryptophan synthase beta chain from Thermosynechococcus vestitus (strain NIES-2133 / IAM M-273 / BP-1).